We begin with the raw amino-acid sequence, 570 residues long: Serine/threonine-protein kinase flr-4 (570 aa).

The region spanning 40–331 (YKYIQDLGKG…KLRIQIKKIL (292 aa)) is the Protein kinase domain. ATP-binding positions include 46–54 (LGKGRFGTV) and Lys-67. Asp-172 functions as the Proton acceptor in the catalytic mechanism. A disordered region spans residues 338–369 (EEETDISHPISNSNTDSSTAISHNHSNDRKVG). Polar residues predominate over residues 346–361 (PISNSNTDSSTAISHN). 3 consecutive transmembrane segments (helical) span residues 400-420 (IMQI…FLNI), 425-445 (ICYL…FLLI), and 471-491 (LIIS…CCMV). The segment at 550–570 (VRRNHDDYYYDESSGPANEEN) is disordered.

It belongs to the protein kinase superfamily. Ser/Thr protein kinase family. In terms of tissue distribution, present in the intestinal cells from comma-stage embryos through the adult stage, although the intestinal expression is weaker after the L1 stage. Accumulates at the cell membrane of intestinal cells, especially the lateral membrane intervening the intestinal cells. Also detected in the muscles of the pharyngeal isthmus from the 3-fold embryonic stage, and in a pair of head neurons, which correspond to the AUA neurons, from the late L1 stage (at protein level).

The protein resides in the membrane. The catalysed reaction is L-seryl-[protein] + ATP = O-phospho-L-seryl-[protein] + ADP + H(+). The enzyme catalyses L-threonyl-[protein] + ATP = O-phospho-L-threonyl-[protein] + ADP + H(+). In terms of biological role, probable serine-threonine protein kinase involved in the control of defecation rhythms. Required to increase the length of defecation cycle period. Acts in a cell-functional rather than developmental aspect in the regulation of defecation rhythms. Prevents preferential activation of the p38 MAPK pathway in response to the levels of vitamin B12 in different food types during larval development, thereby regulating the expression of cytoprotective genes, modulating life span and stress tolerance. This is Serine/threonine-protein kinase flr-4 (flr-4) from Caenorhabditis elegans.